The following is a 456-amino-acid chain: Putative alanyl-tRNA editing protein alaX (456 aa).

The Zn(2+) site is built by His-125, His-129, Cys-240, and His-244.

This sequence belongs to the class-II aminoacyl-tRNA synthetase family. Alax-L subfamily. Zn(2+) is required as a cofactor.

In terms of biological role, may function in trans to edit the amino acid moiety from incorrectly charged tRNA(Ala). This chain is Putative alanyl-tRNA editing protein alaX, found in Saccharomyces cerevisiae (strain ATCC 204508 / S288c) (Baker's yeast).